A 286-amino-acid chain; its full sequence is Plasma membrane ascorbate-dependent reductase CYBRD1 (286 aa).

Residues 1 to 7 lie on the Cytoplasmic side of the membrane; that stretch reads MAMEGYW. The helical transmembrane segment at 8–32 threads the bilayer; sequence RFLALLGSALLVGFLSVIFALVWVL. Residues 15-220 enclose the Cytochrome b561 domain; the sequence is SALLVGFLSV…FGALIFWIVT (206 aa). Residues 33–47 lie on the Extracellular side of the membrane; sequence HYREGLGWDGSALEF. Residues 48–69 form a helical membrane-spanning segment; the sequence is NWHPVLMVTGFVFIQGIAIIVY. 3 residues coordinate heme b: His50, Arg70, and Lys79. Topologically, residues 70–78 are cytoplasmic; the sequence is RLPWTWKCS. Residues Lys79 and Lys83 each contribute to the L-ascorbate site. The chain crosses the membrane as a helical span at residues 79–105; the sequence is KLLMKSIHAGLNAVAAILAIISVVAVF. His86 is a heme b binding site. The Extracellular segment spans residues 106–118; that stretch reads ENHNVNNIANMYS. His108 provides a ligand contact to Fe(3+). Residues 115 to 118 and His120 each bind heme b; that span reads NMYS. The chain crosses the membrane as a helical span at residues 119–144; sequence LHSWVGLIAVICYLLQLLSGFSVFLL. The Cytoplasmic portion of the chain corresponds to 145–151; sequence PWAPLSL. Arg152 is a binding site for L-ascorbate. The chain crosses the membrane as a helical span at residues 152 to 179; that stretch reads RAFLMPIHVYSGIVIFGTVIATALMGLT. The heme b site is built by His159 and Glu180. Residues 180-197 are Extracellular-facing; sequence EKLIFSLRDPAYSTFPPE. The chain crosses the membrane as a helical span at residues 198 to 222; it reads GVFVNTLGLLILVFGALIFWIVTRP. Topologically, residues 223 to 286 are cytoplasmic; that stretch reads QWKRPKEPNS…LDEAGQRSTM (64 aa). Position 225 (Lys225) interacts with heme b. Positions 229–268 are disordered; it reads EPNSTILHPNGGTEQGARGSMPAYSGNNMDKSDSELNSEV. Ser232 is subject to Phosphoserine. At Thr285 the chain carries Phosphothreonine.

Homodimer. Heme b is required as a cofactor. In terms of tissue distribution, present in erythrocyte membranes (at protein level). Also expressed in respiratory epithelium.

It is found in the cell membrane. It localises to the apical cell membrane. It carries out the reaction Fe(3+)(out) + L-ascorbate(in) = monodehydro-L-ascorbate radical(in) + Fe(2+)(out) + H(+). It catalyses the reaction Cu(2+)(out) + L-ascorbate(in) = Cu(+)(out) + monodehydro-L-ascorbate radical(in) + H(+). The catalysed reaction is monodehydro-L-ascorbate radical(out) + L-ascorbate(in) = monodehydro-L-ascorbate radical(in) + L-ascorbate(out). Its activity is regulated as follows. Activated by chelators like citrate, malate, and oxalate specially at alkaline pH. Its function is as follows. Plasma membrane reductase that uses cytoplasmic ascorbate as an electron donor to reduce extracellular Fe(3+) into Fe(2+). Probably functions in dietary iron absorption at the brush border of duodenal enterocytes by producing Fe(2+), the divalent form of iron that can be transported into enterocytes. It is also able to reduce extracellular monodehydro-L-ascorbate and may be involved in extracellular ascorbate regeneration by erythrocytes in blood. May also act as a ferrireductase in airway epithelial cells. May also function as a cupric transmembrane reductase. The chain is Plasma membrane ascorbate-dependent reductase CYBRD1 from Homo sapiens (Human).